The primary structure comprises 345 residues: Transcription initiation factor IIB (345 aa).

Residues 8–40 (VGRNCPHCSAVDSLQTDDVMGEVACTACALVVA) form a TFIIB-type zinc finger. Cysteine 12, cysteine 15, cysteine 32, and cysteine 35 together coordinate Zn(2+). Disordered regions lie at residues 59–89 (DVDH…HMSS) and 318–345 (PTAG…REET). Over residues 71–83 (TAATSAAGSLSAA) the composition is skewed to low complexity.

Belongs to the TFIIB family. As to quaternary structure, monomer. Interacts with RNA polymerase II subunits RPB1 and RPB2. Interacts with TBP; the interaction is direct.

The protein localises to the nucleus. Its function is as follows. Specifically binds to the promoter of the spliced leader (SL) RNA gene and thus is essential for SLRNA transcription. The chain is Transcription initiation factor IIB from Trypanosoma brucei brucei.